Consider the following 72-residue polypeptide: Disintegrin crotatroxin (72 aa).

The 72-residue stretch at 1-72 (AGEECDCGSP…ADCPRNGLYG (72 aa)) folds into the Disintegrin domain. 6 cysteine pairs are disulfide-bonded: cysteine 5–cysteine 20, cysteine 7–cysteine 15, cysteine 14–cysteine 37, cysteine 28–cysteine 34, cysteine 33–cysteine 58, and cysteine 46–cysteine 65. The Cell attachment site motif lies at 50–52 (RGD).

The protein belongs to the venom metalloproteinase (M12B) family. P-II subfamily. P-IIa sub-subfamily. As to quaternary structure, monomer. In terms of tissue distribution, expressed by the venom gland.

It localises to the secreted. Its function is as follows. Inhibits fibrinogen interaction with platelets. Acts by binding to the alpha-IIb/beta-3 (ITGA2B/ITGB3) on the platelet surface and inhibits aggregation induced by ADP, thrombin, platelet-activating factor and collagen. In terms of biological role, inhibits ADP-induced platelet aggregation (IC(50) = 17.5nM), cancer cell migration in vitro, and experimental lung tumor colonization of cancer cells. This Crotalus atrox (Western diamondback rattlesnake) protein is Disintegrin crotatroxin.